Reading from the N-terminus, the 37-residue chain is Potassium channel toxin alpha-KTx 1.3 (37 aa).

Gln1 is modified (pyrrolidone carboxylic acid). 3 cysteine pairs are disulfide-bonded: Cys7–Cys28, Cys13–Cys33, and Cys17–Cys35. The segment at 26 to 33 (GKCMGKKC) is interaction with Ca(2+)-activated K(+) channels.

Belongs to the short scorpion toxin superfamily. Potassium channel inhibitor family. Alpha-KTx 01 subfamily. As to expression, expressed by the venom gland.

It is found in the secreted. Its function is as follows. Blocks selectively the high conductance calcium-activated (maxi-K) potassium channels (KCa1.1/KCNMA1). The protein is Potassium channel toxin alpha-KTx 1.3 of Hottentotta tamulus (Eastern Indian scorpion).